A 400-amino-acid chain; its full sequence is Ribose-phosphate pyrophosphokinase 2, chloroplastic (400 aa).

The transit peptide at 1-44 (MASLALTSPPSVKIPSYLSSSSSSLFSRSSISFRTTESRSRICV) directs the protein to the chloroplast. Positions 214, 216, 225, and 229 each coordinate Mg(2+). The interval 300-315 (GKVAVMVDDIIDTAGT) is binding of phosphoribosylpyrophosphate.

The protein belongs to the ribose-phosphate pyrophosphokinase family.

The protein localises to the plastid. Its subcellular location is the chloroplast. It catalyses the reaction D-ribose 5-phosphate + ATP = 5-phospho-alpha-D-ribose 1-diphosphate + AMP + H(+). The protein is Ribose-phosphate pyrophosphokinase 2, chloroplastic (PRS2) of Arabidopsis thaliana (Mouse-ear cress).